The sequence spans 299 residues: MKPDAHQVKQFLLNLQDTICQQLTAVDGAEFVEDSWQREAGGGGRSRVLRNGGVFEQAGVNFSHVHGEAMPASATAHRPELAGRSFEAMGVSLVVHPHNPYVPTSHANVRFFIAEKPGAEPVWWFGGGFDLTPFYGFEEDAIHWHRTARDLCQPFGEDVYPRYKKWCDDYFYLKHRNEQRGIGGLFFDDLNTPDFDHCFAFMQAVGKGYTDAYLPIVERRKAMAYGERERNFQLYRRGRYVEFNLVWDRGTLFGLQTGGRTESILMSMPPLVRWEYDYQPKDGSPEAALSEFIKVRDWG.

Ser92 is a binding site for substrate. Residues His96 and His106 each coordinate a divalent metal cation. His106 functions as the Proton donor in the catalytic mechanism. Residue 108–110 (NVR) participates in substrate binding. A divalent metal cation-binding residues include His145 and His175. Residues 240 to 275 (YVEFNLVWDRGTLFGLQTGGRTESILMSMPPLVRWE) are important for dimerization. 258-260 (GGR) is a binding site for substrate.

Belongs to the aerobic coproporphyrinogen-III oxidase family. In terms of assembly, homodimer. A divalent metal cation is required as a cofactor.

Its subcellular location is the cytoplasm. The catalysed reaction is coproporphyrinogen III + O2 + 2 H(+) = protoporphyrinogen IX + 2 CO2 + 2 H2O. It participates in porphyrin-containing compound metabolism; protoporphyrin-IX biosynthesis; protoporphyrinogen-IX from coproporphyrinogen-III (O2 route): step 1/1. Functionally, involved in the heme biosynthesis. Catalyzes the aerobic oxidative decarboxylation of propionate groups of rings A and B of coproporphyrinogen-III to yield the vinyl groups in protoporphyrinogen-IX. This is Oxygen-dependent coproporphyrinogen-III oxidase from Shigella flexneri.